Here is a 624-residue protein sequence, read N- to C-terminus: ATP-dependent zinc metalloprotease FtsH (624 aa).

The Cytoplasmic portion of the chain corresponds to 1–7 (MPRAPFS). Residues 8–28 (LLALVLGLAFLAWAFSLAGTV) traverse the membrane as a helical segment. Residues 29-103 (GAPSGTVNYT…VRVEPPQGQN (75 aa)) are Periplasmic-facing. The helical transmembrane segment at 104–124 (ALGFLWPLLLVGLLIGALYYF) threads the bilayer. At 125–624 (SRNGRAGPSD…VKPGGALGGA (500 aa)) the chain is on the cytoplasmic side. ATP contacts are provided by residues alanine 159, 199–203 (GVGKT), and histidine 204. Position 418 (histidine 418) interacts with Zn(2+). Glutamate 419 is a catalytic residue. 2 residues coordinate Zn(2+): histidine 422 and aspartate 493. The interval 595 to 624 (PLEAPEEAREEREPPRVVPKVKPGGALGGA) is disordered. Residues 600–609 (EEAREEREPP) are compositionally biased toward basic and acidic residues.

In the central section; belongs to the AAA ATPase family. The protein in the C-terminal section; belongs to the peptidase M41 family. The isolated soluble domain (residues 126-624) forms a stable hexamer in which the AAA+ domains (residues 126-400) are alternatively open or closed. Requires Zn(2+) as cofactor.

The protein resides in the cell inner membrane. The proteolytic activity is dependent on ATP, both the ATPase and protease activities are inhibited by ADP. In terms of biological role, acts as a processive, ATP-dependent zinc metallopeptidase for both cytoplasmic and membrane proteins. Plays a role in the quality control of integral membrane proteins. Functionally, degrades preferentially unfolded substrates in a processive, ATP-dependent manner, usually after hydrophobic residues. The chain is ATP-dependent zinc metalloprotease FtsH from Thermus thermophilus (strain ATCC 27634 / DSM 579 / HB8).